Here is a 340-residue protein sequence, read N- to C-terminus: Olfactory receptor 5T3 (340 aa).

Residues M1 to V55 lie on the Extracellular side of the membrane. A glycan (N-linked (GlcNAc...) asparagine) is linked at N35. A helical transmembrane segment spans residues F56 to V76. Topologically, residues V77–W84 are cytoplasmic. A helical membrane pass occupies residues L85 to T105. The Extracellular segment spans residues V106–T129. N-linked (GlcNAc...) asparagine glycosylation occurs at N119. A disulfide bridge links C127 with C219. A helical transmembrane segment spans residues Q130 to Y150. Residues D151–R169 lie on the Cytoplasmic side of the membrane. The helical transmembrane segment at V170–I190 threads the bilayer. Residues V191–Q226 lie on the Extracellular side of the membrane. A helical membrane pass occupies residues L227 to S247. At C248–A267 the chain is on the cytoplasmic side. Residues F268–S288 traverse the membrane as a helical segment. Residues Y289–D301 are Extracellular-facing. Residues I302 to L322 traverse the membrane as a helical segment. Over R323 to K340 the chain is Cytoplasmic.

It belongs to the G-protein coupled receptor 1 family.

The protein resides in the cell membrane. Its function is as follows. Odorant receptor. This is Olfactory receptor 5T3 (OR5T3) from Homo sapiens (Human).